The following is a 383-amino-acid chain: MYCLGLMSGTSVDSIDAALVKITGENVDLEIELLSGINHYYPEKLRQTILEVADGKPLSMERLAELDEEIALCFVEAVNKIKQKYSTVALIGSHGQTIYHRPPFKEKLGYTLQLGRGEIIANLTGIPTVNNFRAADIAVGGQGAPLVSKIDACLLSHPQHHRCVQNLGGIGNVTYLPPKEEKNWENRIIGWDTGPGNILIDLAVNRLTHGEKTYDNNGEWAAQGNPHSQLVEQWLKQGFFQQTPPKSTGRELFGEAYLEQCWQDAQVYNLSETDFLATLTELTAASIAHSYQQFLKDPIDEILLCGGGSHNLYLKERIQSHFPSTTTVKTTDEVGMNSDFKEAIAFAILAYWRYVSKIPGNLPQVTGAKQARLLGDIHLPLNS.

ATP is bound at residue 9–16; it reads GTSVDSID.

The protein belongs to the anhydro-N-acetylmuramic acid kinase family.

It catalyses the reaction 1,6-anhydro-N-acetyl-beta-muramate + ATP + H2O = N-acetyl-D-muramate 6-phosphate + ADP + H(+). It participates in amino-sugar metabolism; 1,6-anhydro-N-acetylmuramate degradation. It functions in the pathway cell wall biogenesis; peptidoglycan recycling. Catalyzes the specific phosphorylation of 1,6-anhydro-N-acetylmuramic acid (anhMurNAc) with the simultaneous cleavage of the 1,6-anhydro ring, generating MurNAc-6-P. Is required for the utilization of anhMurNAc either imported from the medium or derived from its own cell wall murein, and thus plays a role in cell wall recycling. The protein is Anhydro-N-acetylmuramic acid kinase of Crocosphaera subtropica (strain ATCC 51142 / BH68) (Cyanothece sp. (strain ATCC 51142)).